Here is a 285-residue protein sequence, read N- to C-terminus: RNA 5'-monophosphate methyltransferase (285 aa).

The segment at 1–28 is disordered; that stretch reads MAATQELSKGGVEEAVEEDDPAALKPGA. Residues R46, N77, D111, 136–137, and M165 each bind S-adenosyl-L-methionine; that span reads DI. The Bin3-type SAM domain maps to 53 to 275; that stretch reads ELLRQLFPPE…KHTEETQAIP (223 aa).

Belongs to the methyltransferase superfamily. Interacts with DICER1; the interaction may be mediated by RNA.

The protein localises to the cytoplasm. The enzyme catalyses a 5'-end 5'-phospho-ribonucleoside-RNA + S-adenosyl-L-methionine = a 5'-end (5'-methylphospho)-ribonucleoside-RNA + S-adenosyl-L-homocysteine. The catalysed reaction is a 5'-end 5'-phospho-ribonucleoside-RNA + 2 S-adenosyl-L-methionine = a 5'-end (5'-bismethylphospho)-ribonucleoside-RNA + 2 S-adenosyl-L-homocysteine. O-methyltransferase that specifically monomethylates 5'-monophosphate of cytoplasmic histidyl tRNA (tRNA(His)), acting as a capping enzyme by protecting tRNA(His) from cleavage by DICER1. Also able, with less efficiently, to methylate the 5' monophosphate of a subset of pre-miRNAs, acting as a negative regulator of miRNA processing. The 5' monophosphate of pre-miRNAs is recognized by DICER1 and is required for pre-miRNAs processing: methylation at this position reduces the processing of pre-miRNAs by DICER1. Was also reported to mediate dimethylation of pre-miR-145; however dimethylation cannot be reproduced by another group which observes a monomethylation of pre-miR-145. The polypeptide is RNA 5'-monophosphate methyltransferase (Rattus norvegicus (Rat)).